We begin with the raw amino-acid sequence, 265 residues long: Undecaprenyl-diphosphatase (265 aa).

8 helical membrane passes run 1 to 21 (MDFI…FLPI), 39 to 61 (QGLA…YFRL), 85 to 105 (LAWA…MLTE), 115 to 135 (LIIA…DWAG), 149 to 169 (ILFI…RSGI), 187 to 207 (FSFL…ALDL), 218 to 238 (ALAL…HYFF), and 244 to 264 (IGML…FYLF).

The protein belongs to the UppP family.

The protein localises to the cell inner membrane. The enzyme catalyses di-trans,octa-cis-undecaprenyl diphosphate + H2O = di-trans,octa-cis-undecaprenyl phosphate + phosphate + H(+). Functionally, catalyzes the dephosphorylation of undecaprenyl diphosphate (UPP). Confers resistance to bacitracin. The protein is Undecaprenyl-diphosphatase of Nitrosococcus oceani (strain ATCC 19707 / BCRC 17464 / JCM 30415 / NCIMB 11848 / C-107).